Consider the following 227-residue polypeptide: Protein GrpE (227 aa).

Residues 1 to 18 (MTQGNQKTEGNPPEQVTV) are compositionally biased toward polar residues. Disordered stretches follow at residues 1–57 (MTQG…GAAT) and 193–227 (TEEG…ASGD). Basic and acidic residues predominate over residues 19-35 (TDKRRIDPETGEVRHVP). Low complexity-rich tracts occupy residues 41–50 (GGTAPQAATA) and 199–213 (EAAA…AAET).

Belongs to the GrpE family. As to quaternary structure, homodimer.

The protein resides in the cytoplasm. Its function is as follows. Participates actively in the response to hyperosmotic and heat shock by preventing the aggregation of stress-denatured proteins, in association with DnaK and GrpE. It is the nucleotide exchange factor for DnaK and may function as a thermosensor. Unfolded proteins bind initially to DnaJ; upon interaction with the DnaJ-bound protein, DnaK hydrolyzes its bound ATP, resulting in the formation of a stable complex. GrpE releases ADP from DnaK; ATP binding to DnaK triggers the release of the substrate protein, thus completing the reaction cycle. Several rounds of ATP-dependent interactions between DnaJ, DnaK and GrpE are required for fully efficient folding. The protein is Protein GrpE of Mycolicibacterium paratuberculosis (strain ATCC BAA-968 / K-10) (Mycobacterium paratuberculosis).